The sequence spans 704 residues: Phosphatidylinositol-3,5-bisphosphate 3-phosphatase MTMR8 (704 aa).

Residues 126 to 500 form the Myotubularin phosphatase domain; it reads GWKLIDPISD…YNIQFWCGMY (375 aa). Residues N250, N275, and I276 each contribute to the a 1,2-diacyl-sn-glycero-3-phospho-(1D-myo-inositol-3,5-bisphosphate) site. N250, N275, and I276 together coordinate a 1,2-diacyl-sn-glycero-3-phospho-(1D-myo-inositol-3-phosphate). Residue C338 is the Phosphocysteine intermediate of the active site. The a 1,2-diacyl-sn-glycero-3-phospho-(1D-myo-inositol-3,5-bisphosphate) site is built by S339, D340, G341, W342, D343, R344, K380, and R384. A 1,2-diacyl-sn-glycero-3-phospho-(1D-myo-inositol-3-phosphate)-binding residues include S339, D340, G341, W342, D343, and R344. Phosphate contacts are provided by S339 and D340. Phosphate-binding residues include W342, D343, and R344. R384 lines the a 1,2-diacyl-sn-glycero-3-phospho-(1D-myo-inositol-3-phosphate) pocket. Positions 515-541 form a coiled coil; that stretch reads ESLLEIKKQRAMLETDVHELEKKLKVR.

This sequence belongs to the protein-tyrosine phosphatase family. Non-receptor class myotubularin subfamily. Homodimer. Heterodimer with MTMR9.

The protein resides in the nucleus envelope. The enzyme catalyses a 1,2-diacyl-sn-glycero-3-phospho-(1D-myo-inositol-3,5-bisphosphate) + H2O = a 1,2-diacyl-sn-glycero-3-phospho-(1D-myo-inositol-5-phosphate) + phosphate. It carries out the reaction a 1,2-diacyl-sn-glycero-3-phospho-(1D-myo-inositol-3-phosphate) + H2O = a 1,2-diacyl-sn-glycero-3-phospho-(1D-myo-inositol) + phosphate. The catalysed reaction is 1,2-dioctanoyl-sn-glycero-3-phospho-(1D-myo-inositol-3,5-bisphosphate) + H2O = 1,2-dioctanoyl-sn-glycero-3-phospho-(1D-myo-inositol-5-phosphate) + phosphate. Its activity is regulated as follows. Interaction with MTMR9 increases phosphatase activity. Functionally, lipid phosphatase that specifically dephosphorylates the D-3 position of phosphatidylinositol 3-phosphate and phosphatidylinositol 3,5-bisphosphate, generating phosphatidylinositol and phosphatidylinositol 5-phosphate. In complex with MTMR9, negatively regulates autophagy. In Homo sapiens (Human), this protein is Phosphatidylinositol-3,5-bisphosphate 3-phosphatase MTMR8.